The chain runs to 326 residues: MKSFGLCLFILVSSPCLLQANLSSDYYTKTCPEFEETLVQIVTDKQIAAPTTAVGTLRLFFHDCMVDGCDASILVASTPRKTSERDADINRSLPGDAFDVITRIKTAVELKCPNIVSCSDILVGATRSLISMVGGPRVNVKFGRKDSLVSDMNRVEGKLARPNMTMDHIISIFESSGLTVQEMVALVGAHTIGFSHCKEFASRIFNKSDQNGPVEMNPKYAAELRKLCANYTNDEQMSAFNDVFTPGKFDNMYYKNLKHGYGLLQSDHAIAFDNRTRSLVDLYAEDETAFFDAFAKAMEKVSEKNVKTGKLGEVRRRCDQYNDYKG.

The N-terminal stretch at 1–20 is a signal peptide; that stretch reads MKSFGLCLFILVSSPCLLQA. N-linked (GlcNAc...) asparagine glycosylation occurs at N21. Intrachain disulfides connect C31-C112, C64-C69, C118-C318, and C197-C228. H62 acts as the Proton acceptor in catalysis. D63, V66, G68, D70, and S72 together coordinate Ca(2+). The N-linked (GlcNAc...) asparagine glycan is linked to N163. H190 contacts heme b. T191 serves as a coordination point for Ca(2+). Residues N206 and N230 are each glycosylated (N-linked (GlcNAc...) asparagine). D242, T245, and D250 together coordinate Ca(2+). Residue N274 is glycosylated (N-linked (GlcNAc...) asparagine).

The protein belongs to the peroxidase family. Classical plant (class III) peroxidase subfamily. The cofactor is heme b. Requires Ca(2+) as cofactor.

It is found in the secreted. The catalysed reaction is 2 a phenolic donor + H2O2 = 2 a phenolic radical donor + 2 H2O. Removal of H(2)O(2), oxidation of toxic reductants, biosynthesis and degradation of lignin, suberization, auxin catabolism, response to environmental stresses such as wounding, pathogen attack and oxidative stress. These functions might be dependent on each isozyme/isoform in each plant tissue. The chain is Peroxidase 6 (PER6) from Arabidopsis thaliana (Mouse-ear cress).